Consider the following 343-residue polypeptide: Holliday junction branch migration complex subunit RuvB (343 aa).

Residues M1–Q20 form a disordered region. The large ATPase domain (RuvB-L) stretch occupies residues M1–Y185. ATP-binding positions include L24, R25, G66, K69, T70, T71, E132–F134, R175, Y185, and R222. A Mg(2+)-binding site is contributed by T70. The interval E186 to E256 is small ATPAse domain (RuvB-S). The tract at residues R259–L343 is head domain (RuvB-H). DNA contacts are provided by R295, R314, and R319.

The protein belongs to the RuvB family. Homohexamer. Forms an RuvA(8)-RuvB(12)-Holliday junction (HJ) complex. HJ DNA is sandwiched between 2 RuvA tetramers; dsDNA enters through RuvA and exits via RuvB. An RuvB hexamer assembles on each DNA strand where it exits the tetramer. Each RuvB hexamer is contacted by two RuvA subunits (via domain III) on 2 adjacent RuvB subunits; this complex drives branch migration. In the full resolvosome a probable DNA-RuvA(4)-RuvB(12)-RuvC(2) complex forms which resolves the HJ.

The protein resides in the cytoplasm. It catalyses the reaction ATP + H2O = ADP + phosphate + H(+). The RuvA-RuvB-RuvC complex processes Holliday junction (HJ) DNA during genetic recombination and DNA repair, while the RuvA-RuvB complex plays an important role in the rescue of blocked DNA replication forks via replication fork reversal (RFR). RuvA specifically binds to HJ cruciform DNA, conferring on it an open structure. The RuvB hexamer acts as an ATP-dependent pump, pulling dsDNA into and through the RuvAB complex. RuvB forms 2 homohexamers on either side of HJ DNA bound by 1 or 2 RuvA tetramers; 4 subunits per hexamer contact DNA at a time. Coordinated motions by a converter formed by DNA-disengaged RuvB subunits stimulates ATP hydrolysis and nucleotide exchange. Immobilization of the converter enables RuvB to convert the ATP-contained energy into a lever motion, pulling 2 nucleotides of DNA out of the RuvA tetramer per ATP hydrolyzed, thus driving DNA branch migration. The RuvB motors rotate together with the DNA substrate, which together with the progressing nucleotide cycle form the mechanistic basis for DNA recombination by continuous HJ branch migration. Branch migration allows RuvC to scan DNA until it finds its consensus sequence, where it cleaves and resolves cruciform DNA. This chain is Holliday junction branch migration complex subunit RuvB, found in Magnetococcus marinus (strain ATCC BAA-1437 / JCM 17883 / MC-1).